We begin with the raw amino-acid sequence, 362 residues long: Phosphoserine aminotransferase (362 aa).

Positions 9 and 42 each coordinate L-glutamate. Pyridoxal 5'-phosphate is bound by residues 76-77 (GR), W102, T153, D174, and Q197. At K198 the chain carries N6-(pyridoxal phosphate)lysine. Residue 239–240 (NT) participates in pyridoxal 5'-phosphate binding.

The protein belongs to the class-V pyridoxal-phosphate-dependent aminotransferase family. SerC subfamily. In terms of assembly, homodimer. Pyridoxal 5'-phosphate is required as a cofactor.

Its subcellular location is the cytoplasm. The enzyme catalyses O-phospho-L-serine + 2-oxoglutarate = 3-phosphooxypyruvate + L-glutamate. It carries out the reaction 4-(phosphooxy)-L-threonine + 2-oxoglutarate = (R)-3-hydroxy-2-oxo-4-phosphooxybutanoate + L-glutamate. Its pathway is amino-acid biosynthesis; L-serine biosynthesis; L-serine from 3-phospho-D-glycerate: step 2/3. It functions in the pathway cofactor biosynthesis; pyridoxine 5'-phosphate biosynthesis; pyridoxine 5'-phosphate from D-erythrose 4-phosphate: step 3/5. Functionally, catalyzes the reversible conversion of 3-phosphohydroxypyruvate to phosphoserine and of 3-hydroxy-2-oxo-4-phosphonooxybutanoate to phosphohydroxythreonine. The sequence is that of Phosphoserine aminotransferase from Escherichia coli O127:H6 (strain E2348/69 / EPEC).